Here is a 79-residue protein sequence, read N- to C-terminus: Conotoxin ArMSGL-0124 (79 aa).

A signal peptide spans 1 to 20 (MSRLGIMVLTLLLLVYMATS). A propeptide spanning residues 21-44 (HQDAGEKQATQRDAINFRWKRSLT) is cleaved from the precursor. Intrachain disulfides connect Cys-52–Cys-64, Cys-56–Cys-73, and Cys-63–Cys-77. At Leu-78 the chain carries Leucine amide.

Belongs to the conotoxin O3 superfamily. As to expression, expressed by the venom duct.

The protein resides in the secreted. The protein is Conotoxin ArMSGL-0124 of Conus arenatus (Sand-dusted cone).